A 116-amino-acid chain; its full sequence is MTDLEYQDLAESALTAIETACDRINDETDADIDNQRTGGMITLTFSNRSQIIINLQKPLQEIWMAAKAGGFHYKFRGNQWLDTKDSSEFFTGLSRYASEQAGQPLVFNAPVPVTGK.

The protein belongs to the frataxin family.

Functionally, involved in iron-sulfur (Fe-S) cluster assembly. May act as a regulator of Fe-S biogenesis. The protein is Iron-sulfur cluster assembly protein CyaY of Polaromonas sp. (strain JS666 / ATCC BAA-500).